The sequence spans 254 residues: UPF0173 protein YddR (254 aa).

This sequence belongs to the UPF0173 family.

This Bacillus subtilis (strain 168) protein is UPF0173 protein YddR (yddR).